Here is a 215-residue protein sequence, read N- to C-terminus: UPF0173 metal-dependent hydrolase NEQ378 (215 aa).

It belongs to the UPF0173 family.

This chain is UPF0173 metal-dependent hydrolase NEQ378, found in Nanoarchaeum equitans (strain Kin4-M).